A 972-amino-acid chain; its full sequence is Nuclear factor NF-kappa-B p105 subunit (972 aa).

In terms of domain architecture, RHD spans 39-246; the sequence is ADGPYLQILE…DAIYDSKAPN (208 aa). S-nitrosocysteine; alternate is present on Cys61. Cys61 is lipidated: S-(15-deoxy-Delta12,14-prostaglandin J2-9-yl)cysteine; alternate. A Glycyl lysine isopeptide (Lys-Gly) (interchain with G-Cter in SUMO2) cross-link involves residue Lys325. Phosphoserine; by PKA is present on Ser337. The Nuclear localization signal motif lies at 360–365; sequence QRKRQK. Residues 372–394 are GRR; the sequence is DSFGGGSGAGAGGGGMFGSGGGG. A disordered region spans residues 425-473; that stretch reads KSNAGMKHGTIDTPSKNDSEGCGKNVDREAVNLSGKVTEPTEQDKESSM. Lys431 and Lys440 each carry N6-acetyllysine; by EP300. An interaction with CFLAR region spans residues 435–972; it reads IDTPSKNDSE…GQEGPIEGKI (538 aa). A compositionally biased stretch (basic and acidic residues) spans 439–454; the sequence is SKNDSEGCGKNVDREA. ANK repeat units lie at residues 539–568, 578–607, 611–640, 647–676, 681–711, and 715–744; these read NGDSVLHLAIIHLHAQLVRDLLEVTSGLIS, LYQTPLHLAVITKQEAVVDDLLRAGADLSL, LGNSVLHLAAKEGQDKILSILLKHKKAALL, EGLNAIHIAVMSNSMPCLLLLVAAGADVNA, SGRTALHLAVEHDNISLAGCLLLEGDAHVDS, and DGTTPLHIAAGRGSTRLAALLKAAGADPLV. The essential for interaction with HIF1AN stretch occupies residues 647 to 681; that stretch reads EGLNAIHIAVMSNSMPCLLLLVAAGADVNAQERKS. A (3S)-3-hydroxyasparagine; by HIF1AN modification is found at Asn675. The residue at position 756 (Ser756) is a Phosphoserine. The ANK 7 repeat unit spans residues 768–798; sequence PGTTPLDMATNWQVFDILNGKPYEPEFTSDD. Positions 814-889 constitute a Death domain; it reads LQLYKLLEIP…EAIEVIQAAF (76 aa). The tract at residues 894-926 is disordered; the sequence is TAAPSPGKGAPQTLSLPLSSASTRSPVDEVRDD. The segment covering 905-918 has biased composition (polar residues); the sequence is QTLSLPLSSASTRS. Phosphoserine; by GSK3-beta; in vitro is present on residues Ser908 and Ser912. Ser927 carries the post-translational modification Phosphoserine. Phosphoserine; by IKKB occurs at positions 931 and 936. Ser941 carries the phosphoserine modification. Thr947 carries the phosphothreonine modification.

Component of the NF-kappa-B p65-p50 complex. Homodimer; component of the NF-kappa-B p50-p50 complex. Component of the NF-kappa-B p105-p50 complex. Component of the NF-kappa-B p50-c-Rel complex. Component of a complex consisting of the NF-kappa-B p50-p50 homodimer and BCL3. Also interacts with MAP3K8. NF-kappa-B p50 subunit interacts with NCOA3 coactivator, which may coactivate NF-kappa-B dependent expression via its histone acetyltransferase activity. Interacts with TSC22D3; this interaction prevents nuclear translocation and DNA-binding. Interacts with SPAG9 and UNC5CL. NFKB1/p105 interacts with CFLAR; the interaction inhibits p105 processing into p50. NFKB1/p105 forms a ternary complex with MAP3K8 and TNIP2. Interacts with GSK3B; the interaction prevents processing of p105 to p50. NFKB1/p50 interacts with NFKBIE. NFKB1/p50 interacts with NFKBIZ. Nuclear factor NF-kappa-B p50 subunit interacts with NFKBID. Directly interacts with MEN1. Interacts with HIF1AN. Interacts with FEM1A; interaction is direct. Generation of the NF-kappa-B p50 (Nuclear factor NF-kappa-B p50 subunit) transcription factor takes place both cotranslationally and post-translationally via non-mutually exclusive mechanisms. A cotranslational processing allows the production of both p50 and p105 (Nuclear factor NF-kappa-B p105 subunit) from a single NFKB1 mRNA. While translation occurs, the particular unfolded structure after the GRR repeat region acts as a substrate for the proteasome, promoting degradation of the C-terminus. The GRR acts as a proteasomal 'stop signal', protecting the region upstream of the GRR from degradation and promoting generation of p50. It is unclear if limited proteasome degradation during cotranslational processing depends on ubiquitination. NF-kappa-B p50 is also generated post-translationally following ubiquitination by the KPC complex, leading to limited processing by the proteasome downstream of the GRR region, thereby generating p50. In terms of processing, phosphorylation at the C-terminus by IKBKB/IKKB acts as a signal for ubiquitination and promotes either complete degradation or processing to generate the NF-kappa-B p50 (Nuclear factor NF-kappa-B p50 subunit). Phosphorylation at Ser-908 and Ser-912 primes p105 for proteolytic processing in response to TNF-alpha stimulation. Phosphorylation at Ser-927, Ser-931 and Ser-936 are required for BTRC/BTRCP-mediated ubiquitination and proteolysis. Phosphorylation at Ser-931 is also required for ubiquitination by the KPC complex and limited processing to generate NF-kappa-B p50 (Nuclear factor NF-kappa-B p50 subunit). Post-translationally, polyubiquitinated at multiple Lys residues in the C-terminus. Polyubiquitinated by the SCF(FBXW11) and SCF(BTRC) complexes following phosphorylation at Ser-923, Ser-927, Ser-931 and Ser-936, leading to its complete degradation. In contrast, polyubiquitination by the KPC complex following phosphorylation at Ser-931 leads to limited proteosomal processing and generation of the active NF-kappa-B p50 (Nuclear factor NF-kappa-B p50 subunit). S-nitrosylation of Cys-61 affects DNA binding. In terms of processing, the covalent modification of cysteine by 15-deoxy-Delta12,14-prostaglandin-J2 is autocatalytic and reversible. It may occur as an alternative to other cysteine modifications, such as S-nitrosylation and S-palmitoylation.

The protein resides in the cytoplasm. Its subcellular location is the nucleus. Its function is as follows. NF-kappa-B is a pleiotropic transcription factor present in almost all cell types and is the endpoint of a series of signal transduction events that are initiated by a vast array of stimuli related to many biological processes such as inflammation, immunity, differentiation, cell growth, tumorigenesis and apoptosis. NF-kappa-B is a homo- or heterodimeric complex formed by the Rel-like domain-containing proteins RELA/p65, RELB, NFKB1/p105, NFKB1/p50, REL and NFKB2/p52 and the heterodimeric p65-p50 complex appears to be most abundant one. The dimers bind at kappa-B sites in the DNA of their target genes and the individual dimers have distinct preferences for different kappa-B sites that they can bind with distinguishable affinity and specificity. Different dimer combinations act as transcriptional activators or repressors, respectively. NF-kappa-B is controlled by various mechanisms of post-translational modification and subcellular compartmentalization as well as by interactions with other cofactors or corepressors. NF-kappa-B complexes are held in the cytoplasm in an inactive state complexed with members of the NF-kappa-B inhibitor (I-kappa-B) family. In a conventional activation pathway, I-kappa-B is phosphorylated by I-kappa-B kinases (IKKs) in response to different activators, subsequently degraded thus liberating the active NF-kappa-B complex which translocates to the nucleus. NF-kappa-B heterodimeric p65-p50 and RelB-p50 complexes are transcriptional activators. The NF-kappa-B p50-p50 homodimer is a transcriptional repressor, but can act as a transcriptional activator when associated with BCL3. NFKB1 appears to have dual functions such as cytoplasmic retention of attached NF-kappa-B proteins by p105 and generation of p50 by a cotranslational processing. The proteasome-mediated process ensures the production of both p50 and p105 and preserves their independent function, although processing of NFKB1/p105 also appears to occur post-translationally. p50 binds to the kappa-B consensus sequence 5'-GGRNNYYCC-3', located in the enhancer region of genes involved in immune response and acute phase reactions. In a complex with MAP3K8, NFKB1/p105 represses MAP3K8-induced MAPK signaling; active MAP3K8 is released by proteasome-dependent degradation of NFKB1/p105. Functionally, P105 is the precursor of the active p50 subunit (Nuclear factor NF-kappa-B p50 subunit) of the nuclear factor NF-kappa-B. Acts as a cytoplasmic retention of attached NF-kappa-B proteins by p105. Constitutes the active form, which associates with RELA/p65 to form the NF-kappa-B p65-p50 complex to form a transcription factor. Together with RELA/p65, binds to the kappa-B consensus sequence 5'-GGRNNYYCC-3', located in the enhancer region of genes involved in immune response and acute phase reactions. The protein is Nuclear factor NF-kappa-B p105 subunit (NFKB1) of Canis lupus familiaris (Dog).